Reading from the N-terminus, the 130-residue chain is Large ribosomal subunit protein bL12 (130 aa).

Belongs to the bacterial ribosomal protein bL12 family. In terms of assembly, homodimer. Part of the ribosomal stalk of the 50S ribosomal subunit. Forms a multimeric L10(L12)X complex, where L10 forms an elongated spine to which 2 to 4 L12 dimers bind in a sequential fashion. Binds GTP-bound translation factors.

Functionally, forms part of the ribosomal stalk which helps the ribosome interact with GTP-bound translation factors. Is thus essential for accurate translation. The sequence is that of Large ribosomal subunit protein bL12 from Chlamydia trachomatis serovar L2 (strain ATCC VR-902B / DSM 19102 / 434/Bu).